A 334-amino-acid polypeptide reads, in one-letter code: Ferredoxin--NADP reductase (334 aa).

7 residues coordinate FAD: Asp33, Gln41, Tyr46, Ala86, Phe120, Asp286, and Thr327.

This sequence belongs to the ferredoxin--NADP reductase type 2 family. Homodimer. It depends on FAD as a cofactor.

The catalysed reaction is 2 reduced [2Fe-2S]-[ferredoxin] + NADP(+) + H(+) = 2 oxidized [2Fe-2S]-[ferredoxin] + NADPH. This chain is Ferredoxin--NADP reductase, found in Rickettsia massiliae (strain Mtu5).